The sequence spans 346 residues: Probable electron transfer flavoprotein subunit alpha, mitochondrial (346 aa).

285-313 (LYVAIGISGAIQHLAGMKESKMIIAINKD) lines the FAD pocket.

The protein belongs to the ETF alpha-subunit/FixB family. Heterodimer of an alpha and a beta subunit. The cofactor is FAD.

The protein localises to the mitochondrion matrix. The electron transfer flavoprotein serves as a specific electron acceptor for several dehydrogenases, including five acyl-CoA dehydrogenases, glutaryl-CoA and sarcosine dehydrogenase. It transfers the electrons to the main mitochondrial respiratory chain via ETF-ubiquinone oxidoreductase (ETF dehydrogenase). This Cryptococcus neoformans var. neoformans serotype D (strain B-3501A) (Filobasidiella neoformans) protein is Probable electron transfer flavoprotein subunit alpha, mitochondrial (ETF1).